A 104-amino-acid chain; its full sequence is Small ribosomal subunit protein bS6 (104 aa).

It belongs to the bacterial ribosomal protein bS6 family.

Binds together with bS18 to 16S ribosomal RNA. This is Small ribosomal subunit protein bS6 from Elusimicrobium minutum (strain Pei191).